A 184-amino-acid chain; its full sequence is Probable RNA 2'-phosphotransferase (184 aa).

The protein belongs to the KptA/TPT1 family.

Functionally, removes the 2'-phosphate from RNA via an intermediate in which the phosphate is ADP-ribosylated by NAD followed by a presumed transesterification to release the RNA and generate ADP-ribose 1''-2''-cyclic phosphate (APPR&gt;P). May function as an ADP-ribosylase. This Rhizobium johnstonii (strain DSM 114642 / LMG 32736 / 3841) (Rhizobium leguminosarum bv. viciae) protein is Probable RNA 2'-phosphotransferase.